We begin with the raw amino-acid sequence, 72 residues long: Large ribosomal subunit protein bL31 (72 aa).

Positions 17, 19, 37, and 40 each coordinate Zn(2+).

Belongs to the bacterial ribosomal protein bL31 family. Type A subfamily. As to quaternary structure, part of the 50S ribosomal subunit. The cofactor is Zn(2+).

Functionally, binds the 23S rRNA. In Clostridium botulinum (strain Loch Maree / Type A3), this protein is Large ribosomal subunit protein bL31.